Consider the following 119-residue polypeptide: Large ribosomal subunit protein uL22 (119 aa).

The protein belongs to the universal ribosomal protein uL22 family. In terms of assembly, part of the 50S ribosomal subunit.

In terms of biological role, this protein binds specifically to 23S rRNA; its binding is stimulated by other ribosomal proteins, e.g. L4, L17, and L20. It is important during the early stages of 50S assembly. It makes multiple contacts with different domains of the 23S rRNA in the assembled 50S subunit and ribosome. Its function is as follows. The globular domain of the protein is located near the polypeptide exit tunnel on the outside of the subunit, while an extended beta-hairpin is found that lines the wall of the exit tunnel in the center of the 70S ribosome. This chain is Large ribosomal subunit protein uL22, found in Chlorobaculum tepidum (strain ATCC 49652 / DSM 12025 / NBRC 103806 / TLS) (Chlorobium tepidum).